A 453-amino-acid polypeptide reads, in one-letter code: UPF0210 protein Mbur_0828 (453 aa).

The protein belongs to the UPF0210 family.

The chain is UPF0210 protein Mbur_0828 from Methanococcoides burtonii (strain DSM 6242 / NBRC 107633 / OCM 468 / ACE-M).